A 61-amino-acid chain; its full sequence is Photosystem II reaction center protein K (61 aa).

The propeptide occupies 1 to 24 (MLNIFNLICICFNSALFSSSFLFA). The helical transmembrane segment at 36-56 (IVDFMPVIPVLFFLLAFVWQA) threads the bilayer.

Belongs to the PsbK family. As to quaternary structure, PSII is composed of 1 copy each of membrane proteins PsbA, PsbB, PsbC, PsbD, PsbE, PsbF, PsbH, PsbI, PsbJ, PsbK, PsbL, PsbM, PsbT, PsbX, PsbY, PsbZ, Psb30/Ycf12, at least 3 peripheral proteins of the oxygen-evolving complex and a large number of cofactors. It forms dimeric complexes.

It localises to the plastid. The protein resides in the chloroplast thylakoid membrane. In terms of biological role, one of the components of the core complex of photosystem II (PSII). PSII is a light-driven water:plastoquinone oxidoreductase that uses light energy to abstract electrons from H(2)O, generating O(2) and a proton gradient subsequently used for ATP formation. It consists of a core antenna complex that captures photons, and an electron transfer chain that converts photonic excitation into a charge separation. This is Photosystem II reaction center protein K from Gossypium barbadense (Sea Island cotton).